Consider the following 334-residue polypeptide: tRNA-dihydrouridine(20/20a) synthase (334 aa).

FMN-binding positions include 18 to 20 and Gln71; that span reads PMM. Cys101 serves as the catalytic Proton donor. FMN contacts are provided by residues Lys140, His172, 212–214, and 234–235; these read NGG and GR.

Belongs to the Dus family. DusA subfamily. FMN is required as a cofactor.

It carries out the reaction 5,6-dihydrouridine(20) in tRNA + NADP(+) = uridine(20) in tRNA + NADPH + H(+). The enzyme catalyses 5,6-dihydrouridine(20) in tRNA + NAD(+) = uridine(20) in tRNA + NADH + H(+). The catalysed reaction is 5,6-dihydrouridine(20a) in tRNA + NADP(+) = uridine(20a) in tRNA + NADPH + H(+). It catalyses the reaction 5,6-dihydrouridine(20a) in tRNA + NAD(+) = uridine(20a) in tRNA + NADH + H(+). In terms of biological role, catalyzes the synthesis of 5,6-dihydrouridine (D), a modified base found in the D-loop of most tRNAs, via the reduction of the C5-C6 double bond in target uridines. Specifically modifies U20 and U20a in tRNAs. This chain is tRNA-dihydrouridine(20/20a) synthase, found in Xanthomonas axonopodis pv. citri (strain 306).